The sequence spans 312 residues: DNA-directed RNA polymerase subunit alpha (312 aa).

The tract at residues 1–229 (MLQYQIDRIE…ELFQPLATVT (229 aa)) is alpha N-terminal domain (alpha-NTD). The interval 239–312 (EPTAEAQIPL…IQIPQSRTSA (74 aa)) is alpha C-terminal domain (alpha-CTD).

Belongs to the RNA polymerase alpha chain family. In terms of assembly, in cyanobacteria the RNAP catalytic core is composed of 2 alpha, 1 beta, 1 beta', 1 gamma and 1 omega subunit. When a sigma factor is associated with the core the holoenzyme is formed, which can initiate transcription.

The catalysed reaction is RNA(n) + a ribonucleoside 5'-triphosphate = RNA(n+1) + diphosphate. DNA-dependent RNA polymerase catalyzes the transcription of DNA into RNA using the four ribonucleoside triphosphates as substrates. The protein is DNA-directed RNA polymerase subunit alpha of Synechococcus sp. (strain WH7803).